The following is a 315-amino-acid chain: Cysteine proteinase 1 (315 aa).

An N-terminal signal peptide occupies residues 1 to 13 (MFTFILMFYIGYG). The propeptide at 14 to 93 (IDFNTWVANN…KGEVRYLNIQ (80 aa)) is activation peptide. Cystine bridges form between Cys115-Cys161 and Cys152-Cys193. Cys118 is an active-site residue. Catalysis depends on residues His259 and Asn279.

It belongs to the peptidase C1 family.

Its subcellular location is the lysosome. With respect to regulation, inhibited by cysteine protease inhibitors ICP1 and ICP2. Cysteine protease which degrades matrix proteins such as collagen, laminin and fibronectin and thus is involved in the destruction of human tissue. Can abolish adhesion. May play an important role in pathogenicity. The protein is Cysteine proteinase 1 of Entamoeba histolytica (strain ATCC 30459 / HM-1:IMSS / ABRM).